The following is a 544-amino-acid chain: Prolyl 4-hydroxylase subunit alpha-3 (544 aa).

The signal sequence occupies residues 1-19 (MGPGARLAALLAVLALGTG). Residues 107 to 131 (LEASENIRALKDGYEKVEQDLPAFE) are a coiled coil. One copy of the TPR repeat lies at 227–260 (EDALDHLAFAYFRAGNVSCALSLSREFLLYSPDN). Residue Asn242 is glycosylated (N-linked (GlcNAc...) asparagine). The region spanning 422 to 529 (YAEYLQVVNY…KWVANKWIHE (108 aa)) is the Fe2OG dioxygenase domain. Fe cation contacts are provided by His440 and Asp442. The N-linked (GlcNAc...) asparagine glycan is linked to Asn482. Residue His510 participates in Fe cation binding. 2-oxoglutarate is bound at residue Lys520.

It belongs to the P4HA family. As to quaternary structure, heterotetramer of two alpha-3 chains and two beta chains (the beta chain is the multi-functional PDI). Fe(2+) serves as cofactor. It depends on L-ascorbate as a cofactor. Post-translationally, N-glycosylation plays no role in the catalytic activity. Highly expressed in placenta, liver and fetal skin. Weakly expressed in fetal epiphyseal cartilage, fetal liver, fibroblast, lung and skeletal muscle. Expressed also in fibrous cap of carotid atherosclerotic lesions.

The protein resides in the endoplasmic reticulum lumen. The catalysed reaction is L-prolyl-[collagen] + 2-oxoglutarate + O2 = trans-4-hydroxy-L-prolyl-[collagen] + succinate + CO2. Its function is as follows. Catalyzes the post-translational formation of 4-hydroxyproline in -Xaa-Pro-Gly- sequences in collagens and other proteins. The protein is Prolyl 4-hydroxylase subunit alpha-3 (P4HA3) of Homo sapiens (Human).